A 197-amino-acid chain; its full sequence is RING-H2 finger protein ATL80 (197 aa).

The helical transmembrane segment at 30 to 50 (LVVILAALLCALICVLGLIAV) threads the bilayer. Residues 111–153 (CAICLAEFSAGDELRVLPQCGHGFHVACIDTWLGSHSSCPSCR) form an RING-type; atypical zinc finger. Residues 168 to 197 (PGSSSSGLESEPEIEIRIKQGEDDPNSFLP) are disordered.

The protein belongs to the RING-type zinc finger family. ATL subfamily.

It localises to the membrane. The catalysed reaction is S-ubiquitinyl-[E2 ubiquitin-conjugating enzyme]-L-cysteine + [acceptor protein]-L-lysine = [E2 ubiquitin-conjugating enzyme]-L-cysteine + N(6)-ubiquitinyl-[acceptor protein]-L-lysine.. It participates in protein modification; protein ubiquitination. Functionally, may be involved in the early steps of the plant defense signaling pathway. The chain is RING-H2 finger protein ATL80 (ATL80) from Arabidopsis thaliana (Mouse-ear cress).